Here is a 236-residue protein sequence, read N- to C-terminus: Peptidase E (236 aa).

Residues Ser122, Asp137, and His159 each act as charge relay system in the active site.

Belongs to the peptidase S51 family.

It localises to the cytoplasm. It catalyses the reaction Dipeptidase E catalyzes the hydrolysis of dipeptides Asp-|-Xaa. It does not act on peptides with N-terminal Glu, Asn or Gln, nor does it cleave isoaspartyl peptides.. Hydrolyzes dipeptides containing N-terminal aspartate residues. May play a role in allowing the cell to use peptide aspartate to spare carbon otherwise required for the synthesis of the aspartate family of amino acids. This chain is Peptidase E, found in Shewanella oneidensis (strain ATCC 700550 / JCM 31522 / CIP 106686 / LMG 19005 / NCIMB 14063 / MR-1).